Here is a 369-residue protein sequence, read N- to C-terminus: Eukaryotic translation initiation factor 3 subunit F (369 aa).

Positions 31-170 (VNIQPQAVFS…TKTYISAPVA (140 aa)) constitute an MPN domain. Basic and acidic residues predominate over residues 309 to 334 (LDEGKEGGEKKDGEGAEGDKKTDGQR). The segment at 309–369 (LDEGKEGGEK…EPREPREAAE (61 aa)) is disordered. The segment covering 335-353 (GQRGQGGKRGGRSGGAGGR) has biased composition (gly residues). Residues 354-369 (GGREQREPREPREAAE) show a composition bias toward basic and acidic residues.

It belongs to the eIF-3 subunit F family. In terms of assembly, component of the eukaryotic translation initiation factor 3 (eIF-3) complex.

It localises to the cytoplasm. Its function is as follows. Component of the eukaryotic translation initiation factor 3 (eIF-3) complex, which is involved in protein synthesis of a specialized repertoire of mRNAs and, together with other initiation factors, stimulates binding of mRNA and methionyl-tRNAi to the 40S ribosome. The eIF-3 complex specifically targets and initiates translation of a subset of mRNAs involved in cell proliferation. The protein is Eukaryotic translation initiation factor 3 subunit F of Neurospora crassa (strain ATCC 24698 / 74-OR23-1A / CBS 708.71 / DSM 1257 / FGSC 987).